Here is a 244-residue protein sequence, read N- to C-terminus: Membrane-spanning 4-domains subfamily A member 6B (244 aa).

Topologically, residues 1-46 are cytoplasmic; sequence MIPQVVTSETVAMISPNGMSLPQTDKPQPFHQWQDSLKKHLKAEIK. A helical transmembrane segment spans residues 47–67; the sequence is VMAAIQIMCAVMVLSLGIILA. Residues 68 to 84 are Extracellular-facing; the sequence is SVPSNLHFTSVFSVLLK. A helical membrane pass occupies residues 85–105; it reads SGYPFIGALFFIVSGILSIVT. At 106-121 the chain is on the cytoplasmic side; it reads ETKSTKILVDSSLTLN. Residues 122 to 142 form a helical membrane-spanning segment; it reads ILSVSFAFMGIIIISVSLAGL. At 143-176 the chain is on the extracellular side; that stretch reads HPASEQCLQSKELRPTEYHYYQFLDRNECFAAKS. Residues 177–197 form a helical membrane-spanning segment; that stretch reads VLAGVFSLMLISTMLELGLAV. The Cytoplasmic segment spans residues 198–244; that stretch reads LTAMLWWKQSHSNIPGNVMFLPHSSNNDSNMESKVLCNPSYEEQLVC.

It belongs to the MS4A family. In terms of tissue distribution, expressed at high levels in thymus, spleen, and peripheral lymph nodes, with less abundant levels in non-lymphoid tissues.

The protein localises to the membrane. In terms of biological role, may be involved in signal transduction as a component of a multimeric receptor complex. The chain is Membrane-spanning 4-domains subfamily A member 6B (Ms4a6b) from Mus musculus (Mouse).